The chain runs to 225 residues: Pyrimidine 5'-nucleotidase YjjG (225 aa).

Asp9 serves as the catalytic Nucleophile.

This sequence belongs to the HAD-like hydrolase superfamily. YjjG family. As to quaternary structure, monomer, homodimer and possibly homotetramer in solution. The cofactor is Mn(2+). Mg(2+) serves as cofactor. Co(2+) is required as a cofactor.

The protein resides in the cytoplasm. The catalysed reaction is a ribonucleoside 5'-phosphate + H2O = a ribonucleoside + phosphate. It carries out the reaction a 2'-deoxyribonucleoside 5'-phosphate + H2O = a 2'-deoxyribonucleoside + phosphate. It catalyses the reaction UMP + H2O = uridine + phosphate. The enzyme catalyses dUMP + H2O = 2'-deoxyuridine + phosphate. The catalysed reaction is dTMP + H2O = thymidine + phosphate. Its activity is regulated as follows. In contrast to nucleotidases from other families, is not inhibited by ribo- and deoxyribonucleoside di- and triphosphates. Its function is as follows. Nucleotidase that shows high phosphatase activity toward non-canonical pyrimidine nucleotides and three canonical nucleoside 5'-monophosphates (UMP, dUMP, and dTMP), and very low activity against TDP, IMP, UDP, GMP, dGMP, AMP, dAMP, and 6-phosphogluconate. Appears to function as a house-cleaning nucleotidase in vivo, since the general nucleotidase activity of YjjG allows it to protect cells against non-canonical pyrimidine derivatives such as 5-fluoro-2'-deoxyuridine, 5-fluorouridine, 5-fluoroorotate, 5-fluorouracil, and 5-aza-2'-deoxycytidine, and prevents the incorporation of potentially mutagenic nucleotides into DNA. Its dUMP phosphatase activity that catalyzes the hydrolysis of dUMP to deoxyuridine is necessary for thymine utilization via the thymine salvage pathway. Is strictly specific to substrates with 5'-phosphates and shows no activity against nucleoside 2'- or 3'-monophosphates. This chain is Pyrimidine 5'-nucleotidase YjjG (yjjG), found in Escherichia coli (strain K12).